The following is a 687-amino-acid chain: MSGRNNNKLPSNLPQLQNLIKRDPPAYVEEFLQQYNHYKSNMEIFKLQPNKPSKELAELVMFMAQIGQCYPEHLSNFPQELKDLLSYNHTVLDPDLRMTFCKALILLRNKNLINPSSLLELFFELLRCHDKLLRKTLYTHIVTDIKNINAKHKNNKVNVVLQNFMYTMLRDSNATAAKMSLDVMIELYRRNIWNDAKTVNVITTACFSKITKILVAALTFFLGKDEEEKQDSDSESEDDGPTARDLLVQYATGKKGSKNKKKLEKAMKVLKKQKKKKKPEVFNFSAIHLIHDPQDFAEKLLKQLESCKERFEVKMMLMNLISRLVGIHELFLFNFYPFVQRFLQPHQREVTKILLFAAQASHHLVPPEIIQSLLVTVANNFVTDKNSGEVMTVGINAIKEITARCPLAMTEELLQDLAQYKTHKDKNVMMSARTLIHLFRTLNPQMLQKKFRGKPTEASIEARIQEYGELDAKDYIPGAEVLELEKGENTEDDEDGWESASLSEEEEEDGEWVDVHHSSDEEQQAIATKLDSMPMEERKAKAAAISTSRVLTQDDFQKIRMAQMKKEMDAAPGKAQKRKYLEIDSDEESRGELLSLRDIERLHKKPKSDKETRLATAMAGRTDRKEFVRKKTKINPFSSSTNKEKKKQKNFMMMRYSQNVRSKSARSFRDKQLALRDALLKKRKRMK.

A phosphoserine mark is found at Ser-232, Ser-234, and Ser-236. A coiled-coil region spans residues 254-315 (KKGSKNKKKL…SCKERFEVKM (62 aa)). The interval 484–509 (LEKGENTEDDEDGWESASLSEEEEED) is disordered. Residues 490–509 (TEDDEDGWESASLSEEEEED) are compositionally biased toward acidic residues. Phosphothreonine is present on Thr-552. Ser-585, Ser-589, and Ser-595 each carry phosphoserine. Residues 604–651 (KKPKSDKETRLATAMAGRTDRKEFVRKKTKINPFSSSTNKEKKKQKNF) form a disordered region.

This sequence belongs to the SDA1 family.

It localises to the nucleus. The protein localises to the nucleolus. Required for 60S pre-ribosomal subunits export to the cytoplasm. The protein is Protein SDA1 homolog (Sdad1) of Mus musculus (Mouse).